A 264-amino-acid chain; its full sequence is Small ribosomal subunit protein eS1 (264 aa).

K34 is modified (N6-acetyllysine; alternate). K34 is covalently cross-linked (Glycyl lysine isopeptide (Lys-Gly) (interchain with G-Cter in SUMO2); alternate). K56 bears the N6-acetyllysine mark. Y155 is subject to ADP-ribosyltyrosine. Residues 232–264 (HGEGSSSGKATGDETGAKVERADGYEPPVQESV) form a disordered region. Phosphoserine is present on residues S236 and S237. The segment covering 242–255 (TGDETGAKVERADG) has biased composition (basic and acidic residues). K249 bears the N6-acetyllysine; alternate mark. K249 is covalently cross-linked (Glycyl lysine isopeptide (Lys-Gly) (interchain with G-Cter in SUMO2); alternate). A Phosphotyrosine modification is found at Y256. The residue at position 263 (S263) is a Phosphoserine.

The protein belongs to the eukaryotic ribosomal protein eS1 family. In terms of assembly, component of the small ribosomal subunit. Mature ribosomes consist of a small (40S) and a large (60S) subunit. The 40S subunit contains about 33 different proteins and 1 molecule of RNA (18S). The 60S subunit contains about 49 different proteins and 3 molecules of RNA (28S, 5.8S and 5S). Identified in a IGF2BP1-dependent mRNP granule complex containing untranslated mRNAs. Binds with high affinity to IPO4. Interacts with DDIT3. Part of the small subunit (SSU) processome, composed of more than 70 proteins and the RNA chaperone small nucleolar RNA (snoRNA) U3. In terms of processing, ADP-ribosylated at Tyr-155 by PARP1 in presence of HPF1.

The protein resides in the cytoplasm. It localises to the nucleus. It is found in the nucleolus. Functionally, component of the small ribosomal subunit. The ribosome is a large ribonucleoprotein complex responsible for the synthesis of proteins in the cell. Part of the small subunit (SSU) processome, first precursor of the small eukaryotic ribosomal subunit. During the assembly of the SSU processome in the nucleolus, many ribosome biogenesis factors, an RNA chaperone and ribosomal proteins associate with the nascent pre-rRNA and work in concert to generate RNA folding, modifications, rearrangements and cleavage as well as targeted degradation of pre-ribosomal RNA by the RNA exosome. May play a role during erythropoiesis through regulation of transcription factor DDIT3. The protein is Small ribosomal subunit protein eS1 of Macaca fascicularis (Crab-eating macaque).